Reading from the N-terminus, the 249-residue chain is 3-deoxy-D-manno-octulosonic acid kinase (249 aa).

Asp-175 is an active-site residue.

This sequence belongs to the protein kinase superfamily. KdkA/RfaP family.

The protein localises to the cell inner membrane. It catalyses the reaction an alpha-Kdo-(2-&gt;6)-lipid IVA + ATP = a 4-O-phospho-alpha-Kdo-(2-&gt;6)-lipid IVA + ADP + H(+). The protein operates within bacterial outer membrane biogenesis; LPS core biosynthesis. Functionally, catalyzes the ATP-dependent phosphorylation of the 3-deoxy-D-manno-octulosonic acid (Kdo) residue in Kdo-lipid IV(A) at the 4-OH position. In Xylella fastidiosa (strain M23), this protein is 3-deoxy-D-manno-octulosonic acid kinase.